The chain runs to 312 residues: Dihydroorotate dehydrogenase B (NAD(+)), catalytic subunit (312 aa).

FMN-binding positions include Ser23 and 47 to 48 (KA). Residues Lys47 and 71 to 75 (NAIGL) contribute to the substrate site. Asn103 and Asn131 together coordinate FMN. Asn131 provides a ligand contact to substrate. The active-site Nucleophile is the Cys134. 2 residues coordinate FMN: Lys171 and Ile197. 198-199 (NT) provides a ligand contact to substrate. FMN-binding positions include Gly223, 249 to 250 (GG), and 271 to 272 (GT).

This sequence belongs to the dihydroorotate dehydrogenase family. Type 1 subfamily. In terms of assembly, heterotetramer of 2 PyrK and 2 PyrD type B subunits. Requires FMN as cofactor.

Its subcellular location is the cytoplasm. The catalysed reaction is (S)-dihydroorotate + NAD(+) = orotate + NADH + H(+). The protein operates within pyrimidine metabolism; UMP biosynthesis via de novo pathway; orotate from (S)-dihydroorotate (NAD(+) route): step 1/1. Functionally, catalyzes the conversion of dihydroorotate to orotate with NAD(+) as electron acceptor. The sequence is that of Dihydroorotate dehydrogenase B (NAD(+)), catalytic subunit (pyrDB) from Streptococcus pneumoniae serotype 4 (strain ATCC BAA-334 / TIGR4).